The primary structure comprises 500 residues: Glycerol kinase (500 aa).

Residue threonine 12 coordinates ADP. The ATP site is built by threonine 12, threonine 13, and serine 14. Threonine 12 lines the sn-glycerol 3-phosphate pocket. Position 16 (arginine 16) interacts with ADP. The sn-glycerol 3-phosphate site is built by arginine 82, glutamate 83, tyrosine 135, and aspartate 245. Glycerol-binding residues include arginine 82, glutamate 83, tyrosine 135, aspartate 245, and glutamine 246. Positions 267 and 310 each coordinate ADP. Residues threonine 267, glycine 310, glutamine 314, and glycine 411 each coordinate ATP. ADP-binding residues include glycine 411 and asparagine 415.

It belongs to the FGGY kinase family. In terms of assembly, homotetramer and homodimer (in equilibrium).

The catalysed reaction is glycerol + ATP = sn-glycerol 3-phosphate + ADP + H(+). It functions in the pathway polyol metabolism; glycerol degradation via glycerol kinase pathway; sn-glycerol 3-phosphate from glycerol: step 1/1. Activated by phosphorylation and inhibited by fructose 1,6-bisphosphate (FBP). Functionally, key enzyme in the regulation of glycerol uptake and metabolism. Catalyzes the phosphorylation of glycerol to yield sn-glycerol 3-phosphate. The sequence is that of Glycerol kinase from Clostridium perfringens (strain 13 / Type A).